Reading from the N-terminus, the 104-residue chain is Small ribosomal subunit protein uS10 (104 aa).

The protein belongs to the universal ribosomal protein uS10 family. In terms of assembly, part of the 30S ribosomal subunit.

Functionally, involved in the binding of tRNA to the ribosomes. The protein is Small ribosomal subunit protein uS10 of Thermosynechococcus vestitus (strain NIES-2133 / IAM M-273 / BP-1).